The primary structure comprises 387 residues: MDMNSFSPMMPTSPLSMINQIKFEDGPDLKDLFITVDAPESHVTTIETFITYRIVTKTSRGEFDSSEFEVRRRYQDFLWLKGKLEEAHPTLIIPPLPEKFIVKGMVERFNDDFIETRRKALHKFLNRIADHPTLTFNEDFKVFLTAQAEELSSYKKQGPGLLSRMGQTVRAVASSMRGVKNRPEEFMEMNNFIETFSQKINLIDKISQRIYKEERDYFDEMKEYGPIHILWSASEEELVDTLKGMAGCIEQCCKATEKRMAGLSEALLPVVHEYVLYSEMLVGVMKRRDQIQTELDSKVEALTYKKADIDLLTEEIGKLEDKVECANNALKADWERWKQNMKNDLRSAFTDTAEQNIRYYEQCLATWESFLTSQTDLPSEEDSEEKL.

The PX domain occupies 30 to 151 (KDLFITVDAP…VFLTAQAEEL (122 aa)). Residues Arg73, Gln75, Lys103, and Arg117 each contribute to the a 1,2-diacyl-sn-glycero-3-phospho-(1D-myo-inositol-3-phosphate) site. One can recognise a BAR domain in the interval 178–387 (GVKNRPEEFM…PSEEDSEEKL (210 aa)).

Belongs to the sorting nexin family. As to quaternary structure, heterodimer; heterodimerizes with SNX4.

The protein localises to the early endosome membrane. Its function is as follows. Involved in the regulation of endocytosis and in several stages of intracellular trafficking. Together with SNX4, involved in autophagosome assembly by regulating trafficking and recycling of phospholipid scramblase ATG9A. The protein is Sorting nexin-7 of Mus musculus (Mouse).